The primary structure comprises 449 residues: MTTRILTGITTTGTPHLGNYAGAIRPAIVASRQSDVDSFYFLADYHALIKCDDPLRIQRSRLEIAATWLAAGLDVDRVTFYRQSDIPEIPELTWLLTCVAAKGLLNRAHAYKASVDKNVESCEDPDAGITMGLYSYPVLMAADILMFNAHQVPVGRDQIQHVEMARDIGQRFNHLFGKGREFFVMPEALIEESVATLPGLDGRKMSKSYDNTIPLFSSAKDMKSAISRIVTDSLAPGEAKDPDNSHLFTLYQAFSTPEQCAQFRSELLQGLGWGEAKTRMFTLLDEQLGEAREQYLSLIERPADLEDILLAGAQKARRVATPFLEELREAVGLRSFRTAVQNADTGKKKTTKGARFVSFREDDGSFRFRLLAADGEQLLLSRTFADGKAAGIVSKQLQQGGELDLRSEADRFTLWLNGECVADSPVFADATARDNAVETLKLALAPQQD.

Residues 10 to 12 (TTT) and 18 to 19 (GN) each bind ATP. The short motif at 11–19 (TTGTPHLGN) is the 'HIGH' region element. Residue Asp143 coordinates L-tryptophan. ATP is bound by residues 155 to 157 (GRD), Leu197, and 204 to 208 (KMSKS). The 'KMSKS' region motif lies at 204 to 208 (KMSKS).

The protein belongs to the class-I aminoacyl-tRNA synthetase family. Homodimer.

The protein resides in the cytoplasm. The enzyme catalyses tRNA(Trp) + L-tryptophan + ATP = L-tryptophyl-tRNA(Trp) + AMP + diphosphate + H(+). In terms of biological role, catalyzes the attachment of tryptophan to tRNA(Trp). The protein is Tryptophan--tRNA ligase of Pseudomonas syringae pv. tomato (strain ATCC BAA-871 / DC3000).